The chain runs to 179 residues: UPF0167 protein PA1536 (179 aa).

The protein belongs to the UPF0167 family.

The chain is UPF0167 protein PA1536 from Pseudomonas aeruginosa (strain ATCC 15692 / DSM 22644 / CIP 104116 / JCM 14847 / LMG 12228 / 1C / PRS 101 / PAO1).